The following is a 201-amino-acid chain: Thioredoxin reductase-like selenoprotein T (201 aa).

A signal peptide spans 1–26 (MARSSGPLCLLLLGGLVAGILSGASA). The cysteinyl-selenocysteine (Cys-Sec) cross-link spans 51–54 (CVSU). Position 54 (U54) is a non-standard amino acid, selenocysteine. Residues 96–116 (VFKLVLIGLIIAGKDPFAFFG) traverse the membrane as a helical segment.

This sequence belongs to the SelWTH family. Selenoprotein T subfamily. In terms of processing, may contain a selenide-sulfide bond between Cys-51 and Sec-54. This bond is speculated to serve as redox-active pair.

The protein resides in the endoplasmic reticulum membrane. The catalysed reaction is [thioredoxin]-dithiol + NADP(+) = [thioredoxin]-disulfide + NADPH + H(+). Functionally, selenoprotein with thioredoxin reductase-like oxidoreductase activity. The chain is Thioredoxin reductase-like selenoprotein T (selenot) from Xenopus tropicalis (Western clawed frog).